A 301-amino-acid chain; its full sequence is Porin (301 aa).

As to quaternary structure, homotrimer.

It is found in the cell outer membrane. In terms of biological role, forms channels that allow the passive diffusion of small hydrophilic solutes up to an exclusion limit of about 0.6 kDa. This is Porin from Rhodobacter capsulatus (Rhodopseudomonas capsulata).